We begin with the raw amino-acid sequence, 4262 residues long: Polyketide synthase PksM (4262 aa).

The interval 1-114 (MITEQLHISL…ADMHRKEQTA (114 aa)) is N-terminal hotdog fold 1. Residues 1 to 271 (MITEQLHISL…GKSVRNMSAF (271 aa)) form the PKS/mFAS DH 1 domain. The active-site Proton acceptor; for dehydratase activity 1 is the His-18. The segment at 129–271 (DRILNLDEIY…GKSVRNMSAF (143 aa)) is C-terminal hotdog fold 1. The Proton donor; for dehydratase activity 1 role is filled by Asp-190. The 75-residue stretch at 293–367 (PAFEMYLRQL…ELAAHLADHY (75 aa)) folds into the Carrier 1 domain. An O-(pantetheine 4'-phosphoryl)serine modification is found at Ser-327. The Ketosynthase family 3 (KS3) 1 domain maps to 393–831 (GEDIAIIGMA…GSNAHLILEE (439 aa)). Residues Cys-569, His-704, and His-744 each act as for beta-ketoacyl synthase 1 activity in the active site. The N-terminal hotdog fold 2 stretch occupies residues 1009–1135 (HPLVHRNTSD…GRAVISDEAE (127 aa)). Residues 1009–1301 (HPLVHRNTSD…MRALDGEQHS (293 aa)) form the PKS/mFAS DH 2 domain. His-1038 acts as the Proton acceptor; for dehydratase activity 2 in catalysis. The interval 1149–1301 (SLDTVTSEQC…MRALDGEQHS (153 aa)) is C-terminal hotdog fold 2. The Proton donor; for dehydratase activity 2 role is filled by Asp-1211. One can recognise a Carrier 2 domain in the interval 2188–2261 (EKSTEYMKKL…ALVEHFIKTK (74 aa)). The residue at position 2222 (Ser-2222) is an O-(pantetheine 4'-phosphoryl)serine. A compositionally biased stretch (polar residues) spans 2275-2291 (VQQHTPAESRTQSSQKP). Residues 2275–2313 (VQQHTPAESRTQSSQKPDQAAKRTRRFRKLGFSGEKETP) are disordered. Residues 2319–2734 (SRDVAVIGIS…GSNAHIILEE (416 aa)) enclose the Ketosynthase family 3 (KS3) 2 domain. Active-site for beta-ketoacyl synthase 2 activity residues include Cys-2476, His-2611, and His-2651. Residues 2750-2826 (ALIVLSAKNM…DFIENKADSL (77 aa)) are a coiled coil. Residues 3409-3486 (SIEKRLEHDL…ELISFFLTDH (78 aa)) form the Carrier 3 domain. Ser-3446 carries the post-translational modification O-(pantetheine 4'-phosphoryl)serine. The Ketosynthase family 3 (KS3) 3 domain occupies 3529–3944 (DEPIAIIGMS…GTNAHAVIEE (416 aa)). Catalysis depends on for beta-ketoacyl synthase 3 activity residues Cys-3690, His-3825, and His-3865. Residues 4004-4033 (KAMEARLAIVANNQEQLVRKLKEYVEAMKN) are a coiled coil. In terms of domain architecture, Carrier 4 spans 4135–4212 (NGKTHIQKII…ALSDHLALKA (78 aa)). Position 4172 is an O-(pantetheine 4'-phosphoryl)serine (Ser-4172).

Pantetheine 4'-phosphate serves as cofactor.

It is found in the cytoplasm. Its pathway is antibiotic biosynthesis; bacillaene biosynthesis. Involved in some intermediate steps for the synthesis of the antibiotic polyketide bacillaene which is involved in secondary metabolism. The polypeptide is Polyketide synthase PksM (pksM) (Bacillus subtilis (strain 168)).